A 406-amino-acid chain; its full sequence is Cholinephosphotransferase 1 (406 aa).

Position 2 is an N-acetylalanine (Ala-2). Residues Ala-2–Ala-62 are Cytoplasmic-facing. Residues Pro-63–Ser-83 traverse the membrane as a helical segment. Asn-64 contributes to the CDP-choline binding site. At Tyr-84 to Pro-93 the chain is on the lumenal side. Residues Tyr-94–Ala-118 form a helical membrane-spanning segment. Mg(2+) contacts are provided by Asp-111 and Asp-114. Arg-119 contacts CDP-choline. Over Arg-119 to Ser-125 the chain is Cytoplasmic. Residues Pro-126–Ala-150 traverse the membrane as a helical segment. Asp-132 provides a ligand contact to Mg(2+). The Proton acceptor role is filled by His-133. Mg(2+) is bound at residue Asp-136. Over Val-151 to Leu-160 the chain is Lumenal. The chain crosses the membrane as a helical span at residues Phe-161 to Tyr-179. The Cytoplasmic portion of the chain corresponds to Val-180 to Asp-190. A helical membrane pass occupies residues Val-191–Phe-207. At Gly-208–Ile-222 the chain is on the lumenal side. Residues Lys-223 to Leu-248 form a helical membrane-spanning segment. Residues His-249 to Leu-265 are Cytoplasmic-facing. A helical membrane pass occupies residues Ser-266 to Ile-281. Over Tyr-282–His-293 the chain is Lumenal. The helical transmembrane segment at Pro-294–His-316 threads the bilayer. Topologically, residues Met-317–Phe-329 are cytoplasmic. A helical transmembrane segment spans residues Ile-330–Gln-339. The Lumenal portion of the chain corresponds to Tyr-340–Asp-346. A helical transmembrane segment spans residues Glu-347 to His-376. Residues Leu-377–Asp-406 lie on the Cytoplasmic side of the membrane.

This sequence belongs to the CDP-alcohol phosphatidyltransferase class-I family. The cofactor is Mg(2+). Mn(2+) is required as a cofactor.

It is found in the golgi apparatus membrane. It catalyses the reaction CDP-choline + a 1,2-diacyl-sn-glycerol = a 1,2-diacyl-sn-glycero-3-phosphocholine + CMP + H(+). The enzyme catalyses 1-octadecanoyl-2-(5Z,8Z,11Z,14Z-eicosatetraenoyl)-sn-glycerol + CDP-choline = 1-octadecanoyl-2-(5Z,8Z,11Z,14Z-eicosatetraenoyl)-sn-glycero-3-phosphocholine + CMP + H(+). It carries out the reaction 1-hexadecanoyl-2-(9Z-octadecenoyl)-sn-glycerol + CDP-choline = 1-hexadecanoyl-2-(9Z-octadecenoyl)-sn-glycero-3-phosphocholine + CMP + H(+). The catalysed reaction is 1-hexadecanoyl-2-(4Z,7Z,10Z,13Z,16Z,19Z-docosahexaenoyl)-sn-glycerol + CDP-choline = 1-hexadecanoyl-2-(4Z,7Z,10Z,13Z,16Z,19Z-docosahexaenoyl)-sn-glycero-3-phosphocholine + CMP + H(+). It catalyses the reaction 1,2-dioctanoyl-sn-glycerol + CDP-choline = 1,2-dioctanoyl-sn-glycero-3-phosphocholine + CMP + H(+). It functions in the pathway phospholipid metabolism; phosphatidylcholine biosynthesis; phosphatidylcholine from phosphocholine: step 2/2. Functionally, catalyzes the final step of de novo phosphatidylcholine (PC) synthesis, i.e. the transfer of choline phosphate from CDP-choline to the free hydroxyl of a diacylglycerol (DAG), producing a PC. It thereby plays a central role in the formation and maintenance of vesicular membranes. The chain is Cholinephosphotransferase 1 (CHPT1) from Bos taurus (Bovine).